Consider the following 1322-residue polypeptide: Chitin synthase chs-1 (1322 aa).

At 1–39 (MNDGENYWNAFRSHKRSATDGPTLSPWMVTVLQATKLLL) the chain is on the extracellular side. Residues 40-60 (FALCNIVLTLGSVFSKLIVLI) traverse the membrane as a helical segment. Residues 61–128 (MATNIVPRAH…KGQCGQLVKS (68 aa)) lie on the Cytoplasmic side of the membrane. A helical membrane pass occupies residues 129–149 (VVVLESLRAIGLAVLSFHVFP). Topologically, residues 150 to 156 (QLDLARC) are extracellular. A helical membrane pass occupies residues 157–177 (LVLSACFPLVAVLQRSLVAMV). The Cytoplasmic portion of the chain corresponds to 178–193 (SAARTGRSFRNRLGRC). A helical membrane pass occupies residues 194-214 (FVAIPHVIMFLVLMSSCYVWA). Residues 215-221 (LFDNKFT) lie on the Extracellular side of the membrane. A helical membrane pass occupies residues 222–242 (AIIALPIGVICTSAGFWESWI). Topologically, residues 243 to 269 (DTTHSGTSFDELYRLKYAVRKMNTTTK) are cytoplasmic. Residues 270-290 (LIVSLMRIVCTVSVLVSAVYI) form a helical membrane-spanning segment. The Extracellular segment spans residues 291–316 (NDHKKLNSSHFVKAFFSFSTRQPHTR). The N-linked (GlcNAc...) asparagine glycan is linked to N297. A helical transmembrane segment spans residues 317-337 (LLLLATGIIVLHFVMRGISRF). Over 338–342 (LAALD) the chain is Cytoplasmic. The chain crosses the membrane as a helical span at residues 343-363 (LHPFSFVHPLSIAPLIAYGYV). The Extracellular portion of the chain corresponds to 364–396 (RYACQSPTCSIARRLARFGLHWVCDQWFQSARG). Residues 397–417 (IASPDFYICLIWLLVGCYRGW) form a helical membrane-spanning segment. Over 418–836 (RLVRQRYFDT…AISYAYIAYQ (419 aa)) the chain is Cytoplasmic. A coiled-coil region spans residues 455–486 (LNRQEKTMLTEEEDISDENDELRIRNDEVDRV). A helical transmembrane segment spans residues 837 to 857 (FLVIFFSMLGPAIIFTMLVFA). The Extracellular segment spans residues 858-865 (QVAAFELR). Residues 866–886 (GSDVMLYNGIPIGFFIVLCFT) traverse the membrane as a helical segment. At 887–892 (TESNIQ) the chain is on the cytoplasmic side. The chain crosses the membrane as a helical span at residues 893–913 (LIYAKYMSIAYAFVMLAVLVA). The Extracellular portion of the chain corresponds to 914 to 922 (TSSQIVLET). Residues 923–943 (VLAPTSLFIVTMVGIFFFAAC) form a helical membrane-spanning segment. Topologically, residues 944 to 951 (LHPKEFTN) are cytoplasmic. The chain crosses the membrane as a helical span at residues 952-972 (IIHGVVFFLMIPSTYVFLTLY). Residues 973–1148 (SLINLNVITW…AVAEGLASLR (176 aa)) are Extracellular-facing. Residues 1019–1053 (ISCREKKEHEERREKMEKKMQRMELALRSIESGAD) adopt a coiled-coil conformation. A helical membrane pass occupies residues 1149–1169 (NQIAFTILLVNSLLALAIFLI). Topologically, residues 1170-1209 (QKHKNVLSIKFSPIKNFRWTKMNEMTGQYEETDEPLKIDP) are cytoplasmic. The helical transmembrane segment at 1210 to 1230 (LGMGIVVFLLIILFVQTLGML) threads the bilayer. Residues 1231 to 1322 (LHRLNTMIGA…MQRSALSTTE (92 aa)) are Extracellular-facing.

It belongs to the chitin synthase family. Class IV subfamily.

It localises to the cell membrane. It catalyses the reaction [(1-&gt;4)-N-acetyl-beta-D-glucosaminyl](n) + UDP-N-acetyl-alpha-D-glucosamine = [(1-&gt;4)-N-acetyl-beta-D-glucosaminyl](n+1) + UDP + H(+). Essential for the embryonic synthesis of chitin, a component of the eggshell. The protein is Chitin synthase chs-1 of Caenorhabditis elegans.